A 142-amino-acid chain; its full sequence is Ctenidin-3 (142 aa).

The signal sequence occupies residues 1–19 (MKHLIPLIVMASVVLAVYA). Tyrosine 139 carries the post-translational modification Tyrosine amide.

As to expression, expressed in hemocytes (at protein level).

It localises to the secreted. Functionally, antimicrobial protein with bacteriostatic activity against the Gram-negative bacterium E.coli, and very weak activity against the Gram-positive bacterium S.aureus. Lacks activity against the yeast C.albicans. This Cupiennius salei (American wandering spider) protein is Ctenidin-3.